The following is a 569-amino-acid chain: Probable diguanylate cyclase DgcQ (569 aa).

A run of 2 helical transmembrane segments spans residues 25–45 (LGPGHVVNLCFIVVLLFSTLL) and 365–385 (IALTLLWALFTTMLLISWYVI). The GGDEF domain maps to 433–568 (HPFSVIQVDL…GRNRVCASDN (136 aa)). Mg(2+) is bound at residue D441. 3 residues coordinate substrate: N449, H454, and D458. E484 provides a ligand contact to Mg(2+). The active-site Proton acceptor is the E484.

As to quaternary structure, homodimer. Mg(2+) is required as a cofactor.

It localises to the cell inner membrane. It carries out the reaction 2 GTP = 3',3'-c-di-GMP + 2 diphosphate. It participates in glycan metabolism; bacterial cellulose biosynthesis. The protein operates within purine metabolism; 3',5'-cyclic di-GMP biosynthesis. Its function is as follows. Catalyzes the synthesis of cyclic-di-GMP (c-di-GMP) via the condensation of 2 GTP molecules. Cyclic-di-GMP is a second messenger which controls cell surface-associated traits in bacteria. Involved in the regulation of cellulose production. This chain is Probable diguanylate cyclase DgcQ, found in Shigella sonnei (strain Ss046).